Here is a 193-residue protein sequence, read N- to C-terminus: Potassium-transporting ATPase KdpC subunit (193 aa).

A helical membrane pass occupies residues 7-27 (PALVLFALLSALTGLAYPLAV).

The protein belongs to the KdpC family. In terms of assembly, the system is composed of three essential subunits: KdpA, KdpB and KdpC.

The protein resides in the cell inner membrane. In terms of biological role, part of the high-affinity ATP-driven potassium transport (or Kdp) system, which catalyzes the hydrolysis of ATP coupled with the electrogenic transport of potassium into the cytoplasm. This subunit acts as a catalytic chaperone that increases the ATP-binding affinity of the ATP-hydrolyzing subunit KdpB by the formation of a transient KdpB/KdpC/ATP ternary complex. The sequence is that of Potassium-transporting ATPase KdpC subunit from Variovorax paradoxus (strain S110).